Reading from the N-terminus, the 512-residue chain is Cytochrome P450 72A11 (512 aa).

The chain crosses the membrane as a helical span at residues 2–22; sequence EISVASVTVSVAVVVVSWWVW. Cysteine 460 is a heme binding site.

Belongs to the cytochrome P450 family. Requires heme as cofactor.

It localises to the membrane. This Arabidopsis thaliana (Mouse-ear cress) protein is Cytochrome P450 72A11 (CYP72A11).